The primary structure comprises 522 residues: Peptide methionine sulfoxide reductase MsrA/MsrB (522 aa).

In terms of domain architecture, Thioredoxin spans 17-174; that stretch reads LALGACSPKI…ALALIRDPNA (158 aa). The cysteines at positions 68 and 71 are disulfide-linked. The interval 199–354 is peptide methionine sulfoxide reductase A; sequence RTIYLAGGCF…PNGYCHIDIR (156 aa). The active site involves C207. The MsrB domain maps to 383–506; the sequence is DAELKRTLTE…NGASLKFIPL (124 aa). Residues C440 and C495 are joined by a disulfide bond. C495 serves as the catalytic Nucleophile.

This sequence in the N-terminal section; belongs to the thioredoxin family. The protein in the central section; belongs to the MsrA Met sulfoxide reductase family. It in the C-terminal section; belongs to the MsrB Met sulfoxide reductase family.

The catalysed reaction is L-methionyl-[protein] + [thioredoxin]-disulfide + H2O = L-methionyl-(S)-S-oxide-[protein] + [thioredoxin]-dithiol. It carries out the reaction [thioredoxin]-disulfide + L-methionine + H2O = L-methionine (S)-S-oxide + [thioredoxin]-dithiol. It catalyses the reaction L-methionyl-[protein] + [thioredoxin]-disulfide + H2O = L-methionyl-(R)-S-oxide-[protein] + [thioredoxin]-dithiol. In terms of biological role, has an important function as a repair enzyme for proteins that have been inactivated by oxidation. Catalyzes the reversible oxidation-reduction of methionine sulfoxide in proteins to methionine. The protein is Peptide methionine sulfoxide reductase MsrA/MsrB (msrAB) of Neisseria meningitidis serogroup B (strain ATCC BAA-335 / MC58).